The sequence spans 563 residues: (R)-mandelonitrile lyase 1 (563 aa).

The N-terminal stretch at 1–27 (MEKSTMSAILLVLHLFVLLLQYSEVHS) is a signal peptide. FAD-binding positions include 63–64 (TS), 82–83 (ER), valine 129, threonine 133, and 137–140 (NAGV). Residues asparagine 145 and asparagine 162 are each glycosylated (N-linked (GlcNAc...) asparagine). Valine 244 contributes to the FAD binding site. Substrate is bound at residue cysteine 355. A glycan (N-linked (GlcNAc...) asparagine) is linked at asparagine 379. A disulfide bridge connects residues cysteine 426 and cysteine 477. Tyrosine 484 lines the substrate pocket. FAD contacts are provided by residues 485 to 486 (WH) and glycine 514. The active-site Proton donor is the histidine 486. The active-site Proton acceptor is the histidine 524. Residue 525–526 (PQ) coordinates FAD.

The protein belongs to the GMC oxidoreductase family. In terms of assembly, monomer. FAD is required as a cofactor. In terms of processing, glycosylated. As to expression, seeds. Localized within cotyledonary parenchyma cells.

Its subcellular location is the vacuole. It localises to the aleurone grain. The enzyme catalyses (R)-mandelonitrile = benzaldehyde + hydrogen cyanide. Functionally, involved in cyanogenesis, the release of HCN from injured tissues. Catalyzes the stereospecific addition of HCN to a variety of aldehydes in vitro. It is a major seed constituent, and could have the additional role of a storage form for reduced nitrogen. This Prunus serotina (Black cherry) protein is (R)-mandelonitrile lyase 1 (MDL1).